Reading from the N-terminus, the 183-residue chain is MNVSFSIAPYFFKERRAKLNSFRKRKVEIVAEIDSLLKNSSSLAIVEYRGLTVNKLEQLRKEFKSAGVLSKVYKNRLFKIAAENNGYLDLQTDLVGPNLFAFGTTDAIAPAKIIAKNAKEQPLLILKGGIYDNQVVSAAENALISALPSYTEALTMLASGLQSPLKQLAFGLKLLIDEQKITA.

It belongs to the universal ribosomal protein uL10 family. As to quaternary structure, part of the ribosomal stalk of the 50S ribosomal subunit. The N-terminus interacts with L11 and the large rRNA to form the base of the stalk. The C-terminus forms an elongated spine to which L12 dimers bind in a sequential fashion forming a multimeric L10(L12)X complex.

In terms of biological role, forms part of the ribosomal stalk, playing a central role in the interaction of the ribosome with GTP-bound translation factors. The sequence is that of Large ribosomal subunit protein uL10 from Mesomycoplasma hyopneumoniae (strain 7448) (Mycoplasma hyopneumoniae).